The following is an 88-amino-acid chain: RNA-binding protein Hfq (88 aa).

The 61-residue stretch at 10–70 folds into the Sm domain; the sequence is DRFLNILRTK…ISTILPAEYI (61 aa).

It belongs to the Hfq family. Homohexamer.

Its function is as follows. RNA chaperone that binds small regulatory RNA (sRNAs) and mRNAs to facilitate mRNA translational regulation in response to envelope stress, environmental stress and changes in metabolite concentrations. Also binds with high specificity to tRNAs. This Fervidobacterium nodosum (strain ATCC 35602 / DSM 5306 / Rt17-B1) protein is RNA-binding protein Hfq.